Reading from the N-terminus, the 212-residue chain is Urease accessory protein UreG 2 (212 aa).

11–18 (GPVGSGKM) is a GTP binding site.

The protein belongs to the SIMIBI class G3E GTPase family. UreG subfamily. In terms of assembly, homodimer. UreD, UreF and UreG form a complex that acts as a GTP-hydrolysis-dependent molecular chaperone, activating the urease apoprotein by helping to assemble the nickel containing metallocenter of UreC. The UreE protein probably delivers the nickel.

It localises to the cytoplasm. In terms of biological role, facilitates the functional incorporation of the urease nickel metallocenter. This process requires GTP hydrolysis, probably effectuated by UreG. Its function is as follows. Disrupting the ure2 operon has no effect on urease activity, or pathogen survival in BALB/c mice when inoculated by gavage, but confers slightly enhanced resistance to low pH killing in vitro. The sequence is that of Urease accessory protein UreG 2 from Brucella suis biovar 1 (strain 1330).